The chain runs to 173 residues: Translation initiation factor IF-3 (173 aa).

Belongs to the IF-3 family. In terms of assembly, monomer.

It localises to the cytoplasm. IF-3 binds to the 30S ribosomal subunit and shifts the equilibrium between 70S ribosomes and their 50S and 30S subunits in favor of the free subunits, thus enhancing the availability of 30S subunits on which protein synthesis initiation begins. The polypeptide is Translation initiation factor IF-3 (Enterococcus faecalis (strain ATCC 700802 / V583)).